Reading from the N-terminus, the 224-residue chain is Phosphoribosylformylglycinamidine synthase subunit PurQ (224 aa).

The Glutamine amidotransferase type-1 domain occupies 2–224 (KFAVIVFPGS…IVDNFVKGGV (223 aa)). The active-site Nucleophile is the cysteine 86. Residues histidine 194 and glutamate 196 contribute to the active site.

Part of the FGAM synthase complex composed of 1 PurL, 1 PurQ and 2 PurS subunits.

The protein localises to the cytoplasm. The catalysed reaction is N(2)-formyl-N(1)-(5-phospho-beta-D-ribosyl)glycinamide + L-glutamine + ATP + H2O = 2-formamido-N(1)-(5-O-phospho-beta-D-ribosyl)acetamidine + L-glutamate + ADP + phosphate + H(+). It catalyses the reaction L-glutamine + H2O = L-glutamate + NH4(+). It functions in the pathway purine metabolism; IMP biosynthesis via de novo pathway; 5-amino-1-(5-phospho-D-ribosyl)imidazole from N(2)-formyl-N(1)-(5-phospho-D-ribosyl)glycinamide: step 1/2. Its function is as follows. Part of the phosphoribosylformylglycinamidine synthase complex involved in the purines biosynthetic pathway. Catalyzes the ATP-dependent conversion of formylglycinamide ribonucleotide (FGAR) and glutamine to yield formylglycinamidine ribonucleotide (FGAM) and glutamate. The FGAM synthase complex is composed of three subunits. PurQ produces an ammonia molecule by converting glutamine to glutamate. PurL transfers the ammonia molecule to FGAR to form FGAM in an ATP-dependent manner. PurS interacts with PurQ and PurL and is thought to assist in the transfer of the ammonia molecule from PurQ to PurL. This is Phosphoribosylformylglycinamidine synthase subunit PurQ from Caldanaerobacter subterraneus subsp. tengcongensis (strain DSM 15242 / JCM 11007 / NBRC 100824 / MB4) (Thermoanaerobacter tengcongensis).